Reading from the N-terminus, the 430-residue chain is tRNA(Ile)-lysidine synthase (430 aa).

27-32 (SGGSDS) is a binding site for ATP.

The protein belongs to the tRNA(Ile)-lysidine synthase family.

Its subcellular location is the cytoplasm. The catalysed reaction is cytidine(34) in tRNA(Ile2) + L-lysine + ATP = lysidine(34) in tRNA(Ile2) + AMP + diphosphate + H(+). Functionally, ligates lysine onto the cytidine present at position 34 of the AUA codon-specific tRNA(Ile) that contains the anticodon CAU, in an ATP-dependent manner. Cytidine is converted to lysidine, thus changing the amino acid specificity of the tRNA from methionine to isoleucine. The protein is tRNA(Ile)-lysidine synthase of Rickettsia prowazekii (strain Madrid E).